A 516-amino-acid polypeptide reads, in one-letter code: GMP synthase [glutamine-hydrolyzing] (516 aa).

The 191-residue stretch at lysine 8–leucine 198 folds into the Glutamine amidotransferase type-1 domain. The active-site Nucleophile is the cysteine 84. Catalysis depends on residues histidine 172 and glutamate 174. The GMPS ATP-PPase domain maps to tryptophan 199–arginine 391. Serine 226 to serine 232 serves as a coordination point for ATP.

As to quaternary structure, homodimer.

The catalysed reaction is XMP + L-glutamine + ATP + H2O = GMP + L-glutamate + AMP + diphosphate + 2 H(+). It functions in the pathway purine metabolism; GMP biosynthesis; GMP from XMP (L-Gln route): step 1/1. In terms of biological role, catalyzes the synthesis of GMP from XMP. This is GMP synthase [glutamine-hydrolyzing] from Francisella tularensis subsp. mediasiatica (strain FSC147).